The sequence spans 83 residues: Exodeoxyribonuclease 7 small subunit (83 aa).

The protein belongs to the XseB family. As to quaternary structure, heterooligomer composed of large and small subunits.

The protein localises to the cytoplasm. It catalyses the reaction Exonucleolytic cleavage in either 5'- to 3'- or 3'- to 5'-direction to yield nucleoside 5'-phosphates.. Bidirectionally degrades single-stranded DNA into large acid-insoluble oligonucleotides, which are then degraded further into small acid-soluble oligonucleotides. The sequence is that of Exodeoxyribonuclease 7 small subunit from Mesorhizobium japonicum (strain LMG 29417 / CECT 9101 / MAFF 303099) (Mesorhizobium loti (strain MAFF 303099)).